Consider the following 434-residue polypeptide: Trigger factor (434 aa).

The 86-residue stretch at 161–246 (EDRATIDFTG…LKKVEERELP (86 aa)) folds into the PPIase FKBP-type domain.

It belongs to the FKBP-type PPIase family. Tig subfamily.

The protein resides in the cytoplasm. The catalysed reaction is [protein]-peptidylproline (omega=180) = [protein]-peptidylproline (omega=0). Involved in protein export. Acts as a chaperone by maintaining the newly synthesized protein in an open conformation. Functions as a peptidyl-prolyl cis-trans isomerase. The chain is Trigger factor from Pectobacterium atrosepticum (strain SCRI 1043 / ATCC BAA-672) (Erwinia carotovora subsp. atroseptica).